The primary structure comprises 228 residues: Uracil-DNA glycosylase (228 aa).

Catalysis depends on aspartate 65, which acts as the Proton acceptor.

This sequence belongs to the uracil-DNA glycosylase (UDG) superfamily. UNG family.

The protein localises to the cytoplasm. It carries out the reaction Hydrolyzes single-stranded DNA or mismatched double-stranded DNA and polynucleotides, releasing free uracil.. Excises uracil residues from the DNA which can arise as a result of misincorporation of dUMP residues by DNA polymerase or due to deamination of cytosine. In Lacticaseibacillus paracasei (strain ATCC 334 / BCRC 17002 / CCUG 31169 / CIP 107868 / KCTC 3260 / NRRL B-441) (Lactobacillus paracasei), this protein is Uracil-DNA glycosylase.